We begin with the raw amino-acid sequence, 216 residues long: DNA gyrase subunit B (216 aa).

The Toprim domain occupies 140–216 (SELYLVEGDS…PDKLRYHKII (77 aa)).

The protein belongs to the type II topoisomerase GyrB family. As to quaternary structure, heterotetramer, composed of two GyrA and two GyrB chains. In the heterotetramer, GyrA contains the active site tyrosine that forms a transient covalent intermediate with DNA, while GyrB binds cofactors and catalyzes ATP hydrolysis.

It is found in the cytoplasm. The catalysed reaction is ATP-dependent breakage, passage and rejoining of double-stranded DNA.. In terms of biological role, a type II topoisomerase that negatively supercoils closed circular double-stranded (ds) DNA in an ATP-dependent manner to modulate DNA topology and maintain chromosomes in an underwound state. Negative supercoiling favors strand separation, and DNA replication, transcription, recombination and repair, all of which involve strand separation. Also able to catalyze the interconversion of other topological isomers of dsDNA rings, including catenanes and knotted rings. Type II topoisomerases break and join 2 DNA strands simultaneously in an ATP-dependent manner. The protein is DNA gyrase subunit B (gyrB) of Acinetobacter sp. (strain ATCC 33308 / BD413 ErpE27).